A 785-amino-acid polypeptide reads, in one-letter code: Endonuclease MutS2 (785 aa).

333–340 contacts ATP; sequence GPNTGGKT. The region spanning 710–785 is the Smr domain; sequence LDLRGQRYDE…GNGATIVQLK (76 aa).

This sequence belongs to the DNA mismatch repair MutS family. MutS2 subfamily. Homodimer. Binds to stalled ribosomes, contacting rRNA.

Its function is as follows. Endonuclease that is involved in the suppression of homologous recombination and thus may have a key role in the control of bacterial genetic diversity. In terms of biological role, acts as a ribosome collision sensor, splitting the ribosome into its 2 subunits. Detects stalled/collided 70S ribosomes which it binds and splits by an ATP-hydrolysis driven conformational change. Acts upstream of the ribosome quality control system (RQC), a ribosome-associated complex that mediates the extraction of incompletely synthesized nascent chains from stalled ribosomes and their subsequent degradation. Probably generates substrates for RQC. This Lactobacillus acidophilus (strain ATCC 700396 / NCK56 / N2 / NCFM) protein is Endonuclease MutS2.